The primary structure comprises 232 residues: Ubiquitin-conjugating enzyme E2-24 kDa (232 aa).

The span at 1–37 (MSSTPAAGSAAEVATSSATSNAPSAPSTTASNVSNTS) shows a compositional bias: low complexity. Residues 1–87 (MSSTPAAGSA…PRISRALGTS (87 aa)) form a disordered region. Over residues 58–67 (GASGSNAGGG) the composition is skewed to gly residues. A UBC core domain is found at 86 to 232 (TSAKRIQKEL…ARLWTKRYAT (147 aa)). The active-site Glycyl thioester intermediate is C170.

Belongs to the ubiquitin-conjugating enzyme family.

The enzyme catalyses S-ubiquitinyl-[E1 ubiquitin-activating enzyme]-L-cysteine + [E2 ubiquitin-conjugating enzyme]-L-cysteine = [E1 ubiquitin-activating enzyme]-L-cysteine + S-ubiquitinyl-[E2 ubiquitin-conjugating enzyme]-L-cysteine.. The protein operates within protein modification; protein ubiquitination. Functionally, catalyzes the covalent attachment of ubiquitin to other proteins. The chain is Ubiquitin-conjugating enzyme E2-24 kDa from Drosophila melanogaster (Fruit fly).